The chain runs to 154 residues: Transcriptional repressor NrdR (154 aa).

A zinc finger spans residues 3 to 34 (CPHCHKNGSRVVDSRPSEDGSFIRRRRECIHC). Residues 49-139 (LLVIKKDGTR…VYRQFKDVDA (91 aa)) form the ATP-cone domain.

The protein belongs to the NrdR family. The cofactor is Zn(2+).

Functionally, negatively regulates transcription of bacterial ribonucleotide reductase nrd genes and operons by binding to NrdR-boxes. The chain is Transcriptional repressor NrdR from Limosilactobacillus reuteri (strain DSM 20016) (Lactobacillus reuteri).